Consider the following 605-residue polypeptide: Alanine--tRNA ligase (605 aa).

Zn(2+)-binding residues include His463, His467, Cys565, and His569.

Belongs to the class-II aminoacyl-tRNA synthetase family. It depends on Zn(2+) as a cofactor.

Its subcellular location is the cytoplasm. The catalysed reaction is tRNA(Ala) + L-alanine + ATP = L-alanyl-tRNA(Ala) + AMP + diphosphate. In terms of biological role, catalyzes the attachment of alanine to tRNA(Ala) in a two-step reaction: alanine is first activated by ATP to form Ala-AMP and then transferred to the acceptor end of tRNA(Ala). Also edits incorrectly charged Ser-tRNA(Ala) and Gly-tRNA(Ala) via its editing domain. The sequence is that of Alanine--tRNA ligase (alaS) from Treponema pallidum (strain Nichols).